The sequence spans 658 residues: Protein CFAP20DC (658 aa).

Disordered stretches follow at residues 312–522 and 589–634; these read QQGE…EEEY and PVNQ…LDSS. The span at 319–328 shows a compositional bias: polar residues; the sequence is SHPVKQTTPL. The span at 339–349 shows a compositional bias: basic and acidic residues; it reads PPRDPSADKGS. 2 stretches are compositionally biased toward low complexity: residues 351–363 and 417–434; these read RRGLGLRSSSGSR and SSGPPSGAAGSSSSLLLD. The segment covering 494 to 506 has biased composition (basic and acidic residues); that stretch reads DPKEDSRVTKGDT. The segment covering 507–521 has biased composition (acidic residues); the sequence is ELEDDFYGSDSSEEE. Over residues 625 to 634 the composition is skewed to polar residues; it reads QPLEQSLDSS.

This is Protein CFAP20DC from Rattus norvegicus (Rat).